The primary structure comprises 369 residues: Deoxyhypusine synthase (369 aa).

Residue Ser78 is modified to Phosphoserine. NAD(+) contacts are provided by residues 105-109, 131-133, Glu137, and Asp238; these read SNLIS and TAG. 136-137 contacts spermidine; the sequence is EE. Position 243 (Asp243) interacts with spermidine. Gly283 provides a ligand contact to NAD(+). His288 serves as a coordination point for spermidine. 308–309 is an NAD(+) binding site; the sequence is TA. Spermidine is bound by residues 314–316 and 323–329; these read GSD and EAVSWGK. Residue Lys329 is the Nucleophile of the active site. An NAD(+)-binding site is contributed by 342-343; that stretch reads DA.

The protein belongs to the deoxyhypusine synthase family. In terms of assembly, homotetramer formed by a dimer of dimers. NAD(+) serves as cofactor.

The enzyme catalyses [eIF5A protein]-L-lysine + spermidine = [eIF5A protein]-deoxyhypusine + propane-1,3-diamine. The protein operates within protein modification; eIF5A hypusination. Its function is as follows. Catalyzes the NAD-dependent oxidative cleavage of spermidine and the subsequent transfer of the butylamine moiety of spermidine to the epsilon-amino group of a critical lysine residue of the eIF-5A precursor protein to form the intermediate deoxyhypusine residue. This is the first step of the post-translational modification of that lysine into an unusual amino acid residue named hypusine. Hypusination is unique to mature eIF-5A factor and is essential for its function. The protein is Deoxyhypusine synthase (DHPS) of Homo sapiens (Human).